The following is a 199-amino-acid chain: Peptidyl-tRNA hydrolase (199 aa).

Tyrosine 15 serves as a coordination point for tRNA. Histidine 20 serves as the catalytic Proton acceptor. The tRNA site is built by tyrosine 66, asparagine 68, and asparagine 114.

Belongs to the PTH family. As to quaternary structure, monomer.

Its subcellular location is the cytoplasm. It catalyses the reaction an N-acyl-L-alpha-aminoacyl-tRNA + H2O = an N-acyl-L-amino acid + a tRNA + H(+). Hydrolyzes ribosome-free peptidyl-tRNAs (with 1 or more amino acids incorporated), which drop off the ribosome during protein synthesis, or as a result of ribosome stalling. Its function is as follows. Catalyzes the release of premature peptidyl moieties from peptidyl-tRNA molecules trapped in stalled 50S ribosomal subunits, and thus maintains levels of free tRNAs and 50S ribosomes. This is Peptidyl-tRNA hydrolase from Burkholderia cenocepacia (strain HI2424).